A 105-amino-acid polypeptide reads, in one-letter code: uncharacterized protein (105 aa).

Residues 33–100 form the Cupin type-2 domain; it reads LYALDAGTTD…SEDLRVLVVF (68 aa).

This is an uncharacterized protein from Streptomyces coelicolor (strain ATCC BAA-471 / A3(2) / M145).